The primary structure comprises 170 residues: AP-5 complex subunit sigma-1 (170 aa).

In terms of assembly, probably part of the adaptor protein complex 5 (AP-5) a tetramer composed of AP5B1, AP5M1, AP5S1 and AP5Z1. Interacts with ZFYVE26 and SPG11.

The protein localises to the cytoplasm. Its subcellular location is the cytosol. The protein resides in the late endosome membrane. It localises to the lysosome membrane. Functionally, as part of AP-5, a probable fifth adaptor protein complex it may be involved in endosomal transport. In Mus musculus (Mouse), this protein is AP-5 complex subunit sigma-1 (Ap5s1).